The chain runs to 294 residues: Glycine--tRNA ligase alpha subunit (294 aa).

The protein belongs to the class-II aminoacyl-tRNA synthetase family. Tetramer of two alpha and two beta subunits.

It is found in the cytoplasm. The catalysed reaction is tRNA(Gly) + glycine + ATP = glycyl-tRNA(Gly) + AMP + diphosphate. In Polynucleobacter asymbioticus (strain DSM 18221 / CIP 109841 / QLW-P1DMWA-1) (Polynucleobacter necessarius subsp. asymbioticus), this protein is Glycine--tRNA ligase alpha subunit.